Here is a 330-residue protein sequence, read N- to C-terminus: Ribosomal RNA small subunit methyltransferase H (330 aa).

S-adenosyl-L-methionine-binding positions include 50–52, Asp-69, Leu-103, Asp-117, and Gln-124; that span reads GGH.

It belongs to the methyltransferase superfamily. RsmH family.

It is found in the cytoplasm. It catalyses the reaction cytidine(1402) in 16S rRNA + S-adenosyl-L-methionine = N(4)-methylcytidine(1402) in 16S rRNA + S-adenosyl-L-homocysteine + H(+). Functionally, specifically methylates the N4 position of cytidine in position 1402 (C1402) of 16S rRNA. This Saccharopolyspora erythraea (strain ATCC 11635 / DSM 40517 / JCM 4748 / NBRC 13426 / NCIMB 8594 / NRRL 2338) protein is Ribosomal RNA small subunit methyltransferase H.